The sequence spans 336 residues: G-protein coupled receptor homolog FPV027 (336 aa).

The Extracellular portion of the chain corresponds to 1-31; sequence MSMNNITSKMNQDSYGYFQLHMSDFTRVSLS. N5 carries N-linked (GlcNAc...) asparagine; by host glycosylation. A helical transmembrane segment spans residues 32–52; sequence IVFTLVFLVGIIGNAVIIWFI. Residues 53–63 lie on the Cytoplasmic side of the membrane; the sequence is GFKWTKTISTL. A helical transmembrane segment spans residues 64 to 84; sequence LFINLALADSLFLIFIPVYTV. The Extracellular segment spans residues 85–101; the sequence is YVLSNFHWYLGEFLCRV. An intrachain disulfide couples C99 to C178. The chain crosses the membrane as a helical span at residues 102 to 122; sequence SSFFFTTNMYASMFLLTFISI. The Cytoplasmic portion of the chain corresponds to 123-143; sequence DKYLTLTSHRLVYKYRKYRNY. A helical transmembrane segment spans residues 144 to 164; sequence YVCIGAIWCISIALGVPTLYY. The Extracellular portion of the chain corresponds to 165 to 200; it reads KRVILSSSRNETRCISYYGDDKHTAITIYRIIVCIR. N-linked (GlcNAc...) asparagine; by host glycosylation is present at N174. A helical membrane pass occupies residues 201–221; that stretch reads FIIGYVFPMTVILLSYALIVY. The Cytoplasmic portion of the chain corresponds to 222 to 240; sequence KVKFINKPPNRSFMITTAS. Residues 241–261 traverse the membrane as a helical segment; it reads IFVFLACWTPHHVLNIISLYG. The Extracellular segment spans residues 262 to 276; it reads LKSTSMYNYIKESIP. A helical membrane pass occupies residues 277 to 297; the sequence is FVNAIAFVYSAINPIIYIFVI. The Cytoplasmic segment spans residues 298 to 336; sequence RLTSTYDSDTMDELRSALLDEETTSTEDCSDIEISDISR.

The protein belongs to the G-protein coupled receptor 1 family.

It localises to the host cell membrane. The protein is G-protein coupled receptor homolog FPV027 of Vertebrata (FPV).